The following is a 157-amino-acid chain: Phosphopantetheine adenylyltransferase (157 aa).

T8 contacts substrate. ATP contacts are provided by residues 8-9 (TF) and H16. 3 residues coordinate substrate: K40, T72, and R86. ATP is bound by residues 87–89 (GLR), E97, and 122–128 (YSFLSSS).

This sequence belongs to the bacterial CoaD family. In terms of assembly, homohexamer. Mg(2+) serves as cofactor.

It is found in the cytoplasm. It carries out the reaction (R)-4'-phosphopantetheine + ATP + H(+) = 3'-dephospho-CoA + diphosphate. Its pathway is cofactor biosynthesis; coenzyme A biosynthesis; CoA from (R)-pantothenate: step 4/5. Functionally, reversibly transfers an adenylyl group from ATP to 4'-phosphopantetheine, yielding dephospho-CoA (dPCoA) and pyrophosphate. This chain is Phosphopantetheine adenylyltransferase, found in Prochlorococcus marinus (strain MIT 9215).